Here is a 1044-residue protein sequence, read N- to C-terminus: Elongation factor 3A (1044 aa).

The residue at position 2 (Ser-2) is an N-acetylserine. The stretch at 5–42 (QQSIKVLEELFQKLSVATADNRHEIASEVASFLNGNII) is one HEAT 1 repeat. ADP-binding residues include Ile-42, His-44, and Ser-83. 6 HEAT repeats span residues 86-123 (PYIV…AVNP), 125-162 (AIKA…AAKD), 166-203 (LRMP…TVDN), 205-241 (DIER…EVTP), 242-279 (ATLS…LVED), and 285-323 (PFLG…VGNV). N6,N6,N6-trimethyllysine is present on residues Lys-187 and Lys-196. Residue Lys-350 forms a Glycyl lysine isopeptide (Lys-Gly) (interchain with G-Cter in ubiquitin) linkage. Residues Thr-392, His-396, and Glu-397 each contribute to the ADP site. Residues 426–641 (DEGEDLCNCE…CPAAKAYEEL (216 aa)) enclose the ABC transporter 1 domain. Lys-636 participates in a covalent cross-link: Glycyl lysine isopeptide (Lys-Gly) (interchain with G-Cter in ubiquitin). Ser-642 bears the Phosphoserine mark. The ABC transporter 2 domain occupies 667–993 (VKVTNMEFQY…AGPRIEKKED (327 aa)). Asn-703 contributes to the ADP binding site. Lys-789 carries the N6,N6,N6-trimethyllysine modification. 3 residues coordinate ADP: Glu-922, Asn-925, and His-951. Phosphothreonine is present on Thr-972. Ser-974 carries the post-translational modification Phosphoserine. The interval 974-1044 (SGHNWVSGQG…DAYVSSDEEF (71 aa)) is disordered. The segment covering 1007–1031 (GGKKKKKLSSAELRKKKKERMKKKK) has biased composition (basic residues). Phosphoserine is present on residues Ser-1039 and Ser-1040.

It belongs to the ABC transporter superfamily. ABCF family. EF3 subfamily. In terms of assembly, monomer. Interacts with elongation factor 1A (eEF1A). Interacts through its N-terminus with 18S rRNA. Associates with ribosomes; preferentially binds ribosomes in the post-translocational state (bearing a peptidyl-tRNA in the P-site) in the presence of ATP, suggesting that ATP hydrolysis is required for ribosome dissociation.

The protein localises to the cytoplasm. Its subcellular location is the cytosol. It carries out the reaction ATP + H2O = ADP + phosphate + H(+). Its pathway is protein biosynthesis; polypeptide chain elongation. Inhibited by the translational inhibitors neomycin and alpha-sarcin, which suppress the ATPase activity. In terms of biological role, ribosome-dependent ATPase that functions in cytoplasmic translation elongation. Required for the ATP-dependent release of deacylated tRNA from the ribosomal E-site during protein biosynthesis. Stimulates the eEF1A-dependent binding of aminoacyl-tRNA to the ribosomal A-site, which has reduced affinity for tRNA as long as the E-site is occupied. Assists translation termination by stimulating the release of nascent protein from the ribosome by release factors. In nutrient-replete conditions, occupies the space on the ribosome bound by GCN1 during amino acid starvation conditions, and therefore indirectly negatively regulates GCN2 kinase activity in replete conditions. The polypeptide is Elongation factor 3A (YEF3) (Saccharomyces cerevisiae (strain ATCC 204508 / S288c) (Baker's yeast)).